Reading from the N-terminus, the 776-residue chain is Cullin-1 (776 aa).

The residue at position 63 (arginine 63) is an Omega-N-methylarginine. One can recognise a Cullin neddylation domain in the interval 706 to 766 (DRKLLIQAAI…IEKEYLERVD (61 aa)). Lysine 720 participates in a covalent cross-link: Glycyl lysine isopeptide (Lys-Gly) (interchain with G-Cter in NEDD8).

It belongs to the cullin family. In terms of assembly, component of multiple Cul1-RING E3 ubiquitin-protein ligase complexes commonly known as SCF (SKP1-CUL1-F-box) complexes, consisting of CUL1, SKP1, RBX1 and a variable F-box domain-containing protein as substrate-specific subunit. Component of the SCF(FBXW11) complex containing FBXW11. Component of the SCF(SKP2) complex containing SKP2, in which it interacts directly with SKP1, SKP2 and RBX1. Component of the SCF(FBXW2) complex containing FBXW2. Component of the SCF(FBXO32) complex containing FBXO32. Component of the probable SCF(FBXO7) complex containing FBXO7. Component of the SCF(FBXO10) complex containing FBXO10. Component of the SCF(FBXO11) complex containing FBXO11. Component of the SCF(FBXO25) complex containing FBXO25. Component of the SCF(FBXO33) complex containing FBXO33. Component of the probable SCF(FBXO4) complex containing FBXO4. Component of the SCF(FBXO44) complex, composed of SKP1, CUL1 and FBXO44. Component of the SCF(BTRC) complex, composed of SKP1, CUL1 and BTRC. This complex binds phosphorylated NFKBIA. Part of a SCF complex consisting of CUL1, RBX1, SKP1 and FBXO2. Component of a SCF(SKP2)-like complex containing CUL1, SKP1, TRIM21 and SKP2. Component of the SCF(FBXO17) complex, composed of SKP1, CUL1 and FBXO17. Component of the SCF(FBXO27) complex, composed of SKP1, CUL1 and FBXO27. Component of the SCF(CCNF) complex consisting of CUL1, RBX1, SKP1 and CCNF. Interacts with CCNF. Component of the SCF(FBXL3) complex composed of CUL1, SKP1, RBX1 and FBXL3. Component of the SCF(FBXL21) complex composed of CUL1, SKP1, RBX1 and FBXL21. Component of the SCF(FBXO9) composed of CUL1, SKP1, RBX1 and FBXO9. Component of the SCF(FBXW7) composed of CUL1, SKP1, RBX1 and FBXW7. Component of the SCF(FBXO31) complex composed of CUL1, SKP1, RBX1 and FBXO31. Interacts with CHEK2; mediates CHEK2 ubiquitination and regulates its function. Part of a complex with TIP120A/CAND1 and RBX1. The unneddylated form interacts with TIP120A/CAND1 and the interaction mediates the exchange of the F-box substrate-specific subunit. Can self-associate. Interacts with FBXW8. Interacts with RNF7. Interacts with TRIM21. Interacts with COPS2. Interacts with UBE2M. Identified in a complex with RBX1 and GLMN. Interacts with CEP68 as part of the SCF(FBXW11) complex; the interaction is probably mediated by FBXW11 and the complex also contains CDK5RAP2 and PCNT. Interacts (when neddylated) with ARIH1; leading to activate the E3 ligase activity of ARIH1. Interacts with COPS9 isoform 2. Interacts with UBXN1. Interacts with KAT7, probably as part of an SCF complex; the interaction mediates KAT7 ubiquitination. Interacts with NOTCH2. Part of a complex that contains DCUN1D5, CUL1 and RBX1; this complex is bridged by CUL1. Interacts (unneddylated form) with DCUN1D1, DCUN1D2, DCUN1D3, DCUN1D4 and DCUN1D5; these interactions promote the cullin neddylation. Interacts (via the C-terminal domain) with CUL7; the interaction seems to be mediated by FBXW8; it is likely specific to FBXW8, but not other F-box proteins. Interacts with UBR2, as part of SCF(BTRC) complex; the interaction mediates 'Lys-48'-linked ubiquitination of UBR2 and is regulated by DUSP22 in the T-cell receptor signaling pathway. (Microbial infection) Interacts with Epstein-Barr virus BPLF1. As to quaternary structure, (Microbial infection) Interacts with Human adenovirus early E1A protein; this interaction inhibits RBX1-CUL1-dependent elongation reaction of ubiquitin chains by the SCF(FBXW7) complex. In terms of assembly, (Microbial infection) Interacts with vaccinia virus protein C9L. (Microbial infection) Interacts with Epstein-Barr virus (EBV) tegument protein BGLF2; this interaction might facilitate CUL1 recruitment to STAT2, leading to ubiquitination and degradation of the latter. In terms of processing, neddylated; which enhances the ubiquitination activity of SCF. Neddylation prevents binding of the inhibitor CAND1. Neddylation leads to structural rearrangment in the complex that allows interaction between the E2 ubiquitin-conjugating enzyme and the acceptor ubiquitin. Deneddylated via its interaction with the COP9 signalosome (CSN) complex. (Microbial infection) Deneddylated by Epstein-Barr virus BPLF1 leading to a S-phase-like environment that is required for efficient replication of the viral genome. Expressed in lung fibroblasts.

Its pathway is protein modification; protein ubiquitination. Functionally, core component of multiple cullin-RING-based SCF (SKP1-CUL1-F-box protein) E3 ubiquitin-protein ligase complexes, which mediate the ubiquitination of proteins involved in cell cycle progression, signal transduction and transcription. SCF complexes and ARIH1 collaborate in tandem to mediate ubiquitination of target proteins. In the SCF complex, serves as a rigid scaffold that organizes the SKP1-F-box protein and RBX1 subunits. May contribute to catalysis through positioning of the substrate and the ubiquitin-conjugating enzyme. The E3 ubiquitin-protein ligase activity of the complex is dependent on the neddylation of the cullin subunit and exchange of the substrate recognition component is mediated by TIP120A/CAND1. The functional specificity of the SCF complex depends on the F-box protein as substrate recognition component. SCF(BTRC) and SCF(FBXW11) direct ubiquitination of CTNNB1 and participate in Wnt signaling. SCF(FBXW11) directs ubiquitination of phosphorylated NFKBIA. SCF(BTRC) directs ubiquitination of NFKBIB, NFKBIE, ATF4, SMAD3, SMAD4, CDC25A, FBXO5 and probably NFKB2. SCF(BTRC) and/or SCF(FBXW11) direct ubiquitination of CEP68. SCF(SKP2) directs ubiquitination of phosphorylated CDKN1B/p27kip and is involved in regulation of G1/S transition. SCF(SKP2) directs ubiquitination of ORC1, CDT1, RBL2, ELF4, CDKN1A, RAG2, FOXO1A, and probably MYC and TAL1. SCF(FBXW7) directs ubiquitination of CCNE1, NOTCH1 released notch intracellular domain (NICD), and probably PSEN1. SCF(FBXW2) directs ubiquitination of GCM1. SCF(FBXO32) directs ubiquitination of MYOD1. SCF(FBXO7) directs ubiquitination of BIRC2 and DLGAP5. SCF(FBXO33) directs ubiquitination of YBX1. SCF(FBXO1) directs ubiquitination of BCL6 and DTL but does not seem to direct ubiquitination of TP53. SCF(BTRC) mediates the ubiquitination of NFKBIA at 'Lys-21' and 'Lys-22'; the degradation frees the associated NFKB1-RELA dimer to translocate into the nucleus and to activate transcription. SCF(CCNF) directs ubiquitination of CCP110. SCF(FBXL3) and SCF(FBXL21) direct ubiquitination of CRY1 and CRY2. SCF(FBXO9) directs ubiquitination of TTI1 and TELO2. SCF(FBXO10) directs ubiquitination of BCL2. Neddylated CUL1-RBX1 ubiquitinates p53/TP53 recruited by Cul7-RING(FBXW8) complex. SCF(BTRC) directs 'Lys-48'-linked ubiquitination of UBR2 in the T-cell receptor signaling pathway. The SCF(FBXO31) protein ligase complex specifically mediates the ubiquitination of proteins amidated at their C-terminus in response to oxidative stress. The chain is Cullin-1 (CUL1) from Homo sapiens (Human).